The primary structure comprises 684 residues: MIDRYKHQQLRIGSVSPQQISAWAKKILPNGEIIGEVTKPYTFHYKTNKPEKDGLFCERIFGPIKSGICACGNYRVIGNDKEDPKFCEQCGVEFVDSRIRRYQMGYIKLACPVTHVWYLKRLPSYIANLLDKPLKELEGLVYCDFSFARPIAKKPTFLRLRGSFEYEIQSWKYSIPLFFTTQGFDAFRNREISTGAGAIREQLADLDLPIIIDYSLVEWKELGEERPTVNEWEDRKVGRRKDFLVRRMELAKHFIRTNIEPEWMVLCLLPVLPPELRPIIQIDGGKLMSSDINELYRRVIYRNNTLIDLLTTSRSTPGELVMCQEKLVQEAVDTLFDNGIRGQPMRDGHNKVYKSFSDIIEGKEGRFRETLLGKRVDYSGRSVIVVGPSLSLHRCGLPREIAIELFQTFVIRGLIRQHFASNIGVAKSKIREKEPVVWEILQDVMQGHPVLLNRAPTLHRLGIQAFQPILVEGHAICLHPLVCKGFNADFDGDQMAVHVPLSLEAQAEARLLMFSHTNLLSPAIGDPISVPTQDMLIGLYVLTSGNRRGICANRYNPCNYRNYQNERIDDNKYKYTKTQEKEPFFCNSYDAIGAYRQKRIHLDSPLWLRWRLDQRVITSREAPIEVHYQSLGTYHEIYGHLLIVRSIKKEILCIYLRTTVGHISLYREIEEAIQGFFRACSYGT.

C69, C71, C87, and C90 together coordinate Zn(2+). Mg(2+)-binding residues include D489, D491, and D493.

The protein belongs to the RNA polymerase beta' chain family. RpoC1 subfamily. As to quaternary structure, in plastids the minimal PEP RNA polymerase catalytic core is composed of four subunits: alpha, beta, beta', and beta''. When a (nuclear-encoded) sigma factor is associated with the core the holoenzyme is formed, which can initiate transcription. The cofactor is Mg(2+). Zn(2+) is required as a cofactor.

The protein resides in the plastid. The protein localises to the chloroplast. The enzyme catalyses RNA(n) + a ribonucleoside 5'-triphosphate = RNA(n+1) + diphosphate. In terms of biological role, DNA-dependent RNA polymerase catalyzes the transcription of DNA into RNA using the four ribonucleoside triphosphates as substrates. The protein is DNA-directed RNA polymerase subunit beta' of Morus indica (Mulberry).